We begin with the raw amino-acid sequence, 411 residues long: Prostaglandin E2 receptor EP3 subtype (411 aa).

Topologically, residues 1–49 (MKETRGDGGSAPFCTRLNHSYPGMWAPEARGNLTRPPGPGEDCGSVSVA) are extracellular. 2 N-linked (GlcNAc...) asparagine glycosylation sites follow: Asn-18 and Asn-32. A helical membrane pass occupies residues 50–74 (FPITMLITGFVGNALAMLLVSRSYR). Residues 75–87 (RRESKRKKSFLLC) lie on the Cytoplasmic side of the membrane. The chain crosses the membrane as a helical span at residues 88–108 (IGWLALTDLVGQLLTSPVVIL). Residues 109-127 (VYLSKQRWEQLDPSGRLCT) are Extracellular-facing. An intrachain disulfide couples Cys-126 to Cys-204. The chain crosses the membrane as a helical span at residues 128 to 149 (FFGLTMTVFGLSSLFIASAMAV). The Cytoplasmic segment spans residues 150 to 171 (ERALAIRAPHWYASHMKTRATR). The chain crosses the membrane as a helical span at residues 172-193 (AVLLGVWLAVLAFALLPVLGVG). Topologically, residues 194-223 (QYTIQWPGTWCFISTGRGDNGTSSSHNWGN) are extracellular. N-linked (GlcNAc...) asparagine glycosylation occurs at Asn-213. Residues 224–249 (LFFASTFAFLGLLALAITFTCNLATI) form a helical membrane-spanning segment. Residues 250–279 (KALVSRCRAKAAASQSSAQWGRITTETAIQ) are Cytoplasmic-facing. A helical transmembrane segment spans residues 280-303 (LMGIMCVLSVCWSPLLIMMLKMIF). The Extracellular portion of the chain corresponds to 304–323 (NQTSVEHCKTDTGKQKECNF). The chain crosses the membrane as a helical span at residues 324–345 (FLIAVRLASLNQILDPWVYLLL). Residues 346–411 (RKILLRKFCQ…ADPGARPYQQ (66 aa)) lie on the Cytoplasmic side of the membrane. Over residues 367 to 390 (IQRENRNVSHSGQHEEARDSEKSK) the composition is skewed to basic and acidic residues. The disordered stretch occupies residues 367-392 (IQRENRNVSHSGQHEEARDSEKSKTI).

It belongs to the G-protein coupled receptor 1 family. As to quaternary structure, interacts (via C-terminus) with MKLN1. In the kidney cortex and medulla, adrenal gland and stomach. In kidney, expression is higher in tubules in the outer medulla, with lower levels in cortex. In kidney cortex, expression is restricted to distal tubules.

It is found in the cell membrane. In terms of biological role, receptor for prostaglandin E2 (PGE2). Required for normal development of fever in response to pyrinogens, including IL1B, prostaglandin E2 and bacterial lipopolysaccharide (LPS). Required for normal potentiation of platelet aggregation by prostaglandin E2, and thus plays a role in the regulation of blood coagulation. Required for increased HCO3(-) secretion in the duodenum in response to mucosal acidification, and thereby contributes to the protection of the mucosa against acid-induced ulceration. Not required for normal kidney function, normal urine volume and osmolality. The chain is Prostaglandin E2 receptor EP3 subtype (PTGER3) from Oryctolagus cuniculus (Rabbit).